A 129-amino-acid polypeptide reads, in one-letter code: UPF0344 protein SSP1805 (129 aa).

A run of 4 helical transmembrane segments spans residues Met1–Phe21, Ile36–Ile56, Met68–Ile88, and Leu100–Met120.

This sequence belongs to the UPF0344 family.

The protein resides in the cell membrane. The chain is UPF0344 protein SSP1805 from Staphylococcus saprophyticus subsp. saprophyticus (strain ATCC 15305 / DSM 20229 / NCIMB 8711 / NCTC 7292 / S-41).